We begin with the raw amino-acid sequence, 456 residues long: Ribulose bisphosphate carboxylase large chain (456 aa).

K7 is subject to N6,N6,N6-trimethyllysine. Substrate-binding residues include N116 and T166. Residue K168 is the Proton acceptor of the active site. K170 contributes to the substrate binding site. Mg(2+)-binding residues include K194, D196, and E197. At K194 the chain carries N6-carboxylysine. H287 (proton acceptor) is an active-site residue. Residues R288, H320, and S372 each contribute to the substrate site.

Belongs to the RuBisCO large chain family. Type I subfamily. Heterohexadecamer of 8 large chains and 8 small chains; disulfide-linked. The disulfide link is formed within the large subunit homodimers. The cofactor is Mg(2+). Post-translationally, the disulfide bond which can form in the large chain dimeric partners within the hexadecamer appears to be associated with oxidative stress and protein turnover.

It localises to the plastid. Its subcellular location is the chloroplast. It catalyses the reaction 2 (2R)-3-phosphoglycerate + 2 H(+) = D-ribulose 1,5-bisphosphate + CO2 + H2O. The catalysed reaction is D-ribulose 1,5-bisphosphate + O2 = 2-phosphoglycolate + (2R)-3-phosphoglycerate + 2 H(+). RuBisCO catalyzes two reactions: the carboxylation of D-ribulose 1,5-bisphosphate, the primary event in carbon dioxide fixation, as well as the oxidative fragmentation of the pentose substrate in the photorespiration process. Both reactions occur simultaneously and in competition at the same active site. This is Ribulose bisphosphate carboxylase large chain from Barnardia japonica (Chinese squill).